We begin with the raw amino-acid sequence, 155 residues long: 17.3 kDa class II heat shock protein (155 aa).

The sHSP domain occupies 39-155 (DAKAMAATPA…KPKTIEVKVA (117 aa)).

It belongs to the small heat shock protein (HSP20) family.

Its subcellular location is the cytoplasm. The chain is 17.3 kDa class II heat shock protein from Solanum peruvianum (Peruvian tomato).